A 99-amino-acid polypeptide reads, in one-letter code: MEPVDPNIEPWNQPGSQPKTACNQCYCKKCCYHCQLCFLQKGLGICYGREKRRQRTTTPYASKNHKDPIPKQPLPQARGDPTGPKESKKEVESKTKTDP.

Positions 1–20 (MEPVDPNIEPWNQPGSQPKT) are disordered. Residues 1 to 24 (MEPVDPNIEPWNQPGSQPKTACNQ) form an interaction with human CREBBP region. The segment at 1-48 (MEPVDPNIEPWNQPGSQPKTACNQCYCKKCCYHCQLCFLQKGLGICYG) is transactivation. Zn(2+)-binding residues include C22, C25, and C27. The interval 22–37 (CNQCYCKKCCYHCQLC) is cysteine-rich. The residue at position 28 (K28) is an N6-acetyllysine; by host PCAF. Residues C30, H33, C34, and C37 each contribute to the Zn(2+) site. Positions 38–48 (FLQKGLGICYG) are core. Residues 49 to 57 (REKRRQRTT) carry the Nuclear localization signal, RNA-binding (TAR), and protein transduction motif. The tract at residues 49-86 (REKRRQRTTTPYASKNHKDPIPKQPLPQARGDPTGPKE) is interaction with the host capping enzyme RNGTT. The residue at position 51 (K51) is an N6-acetyllysine; by host EP300 and GCN5L2. 2 positions are modified to asymmetric dimethylarginine; by host PRMT6: R52 and R53. The interval 54 to 99 (QRTTTPYASKNHKDPIPKQPLPQARGDPTGPKESKKEVESKTKTDP) is disordered. Residue K71 forms a Glycyl lysine isopeptide (Lys-Gly) (interchain with G-Cter in ubiquitin) linkage. The Cell attachment site motif lies at 78 to 80 (RGD). The span at 83–99 (GPKESKKEVESKTKTDP) shows a compositional bias: basic and acidic residues.

This sequence belongs to the lentiviruses Tat family. In terms of assembly, interacts with host CCNT1. Associates with the P-TEFb complex composed at least of Tat, P-TEFb (CDK9 and CCNT1), TAR RNA, RNA Pol II. Recruits the HATs CREBBP, TAF1/TFIID, EP300, PCAF and GCN5L2. Interacts with host KAT5/Tip60; this interaction targets the latter to degradation. Interacts with the host deacetylase SIRT1. Interacts with host capping enzyme RNGTT; this interaction stimulates RNGTT. Binds to host KDR, and to the host integrins ITGAV/ITGB3 and ITGA5/ITGB1. Interacts with host KPNB1/importin beta-1 without previous binding to KPNA1/importin alpha-1. Interacts with EIF2AK2. Interacts with host nucleosome assembly protein NAP1L1; this interaction may be required for the transport of Tat within the nucleus, since the two proteins interact at the nuclear rim. Interacts with host C1QBP/SF2P32; this interaction involves lysine-acetylated Tat. Interacts with the host chemokine receptors CCR2, CCR3 and CXCR4. Interacts with host DPP4/CD26; this interaction may trigger an anti-proliferative effect. Interacts with host LDLR. Interacts with the host extracellular matrix metalloproteinase MMP1. Interacts with host PRMT6; this interaction mediates Tat's methylation. Interacts with, and is ubiquitinated by MDM2/Hdm2. Interacts with host PSMC3 and HTATIP2. Interacts with STAB1; this interaction may overcome SATB1-mediated repression of IL2 and IL2RA (interleukin) in T cells by binding to the same domain than HDAC1. Interacts (when acetylated) with human CDK13, thereby increasing HIV-1 mRNA splicing and promoting the production of the doubly spliced HIV-1 protein Nef. Interacts with host TBP; this interaction modulates the activity of transcriptional pre-initiation complex. Interacts with host RELA. Interacts with host PLSCR1; this interaction negatively regulates Tat transactivation activity by altering its subcellular distribution. Asymmetrical arginine methylation by host PRMT6 seems to diminish the transactivation capacity of Tat and affects the interaction with host CCNT1. In terms of processing, acetylation by EP300, CREBBP, GCN5L2/GCN5 and PCAF regulates the transactivation activity of Tat. EP300-mediated acetylation of Lys-50 promotes dissociation of Tat from the TAR RNA through the competitive binding to PCAF's bromodomain. In addition, the non-acetylated Tat's N-terminus can also interact with PCAF. PCAF-mediated acetylation of Lys-28 enhances Tat's binding to CCNT1. Lys-50 is deacetylated by SIRT1. Post-translationally, polyubiquitination by host MDM2 does not target Tat to degradation, but activates its transactivation function and fosters interaction with CCNT1 and TAR RNA. Phosphorylated by EIF2AK2 on serine and threonine residues adjacent to the basic region important for TAR RNA binding and function. Phosphorylation of Tat by EIF2AK2 is dependent on the prior activation of EIF2AK2 by dsRNA.

The protein resides in the host nucleus. It is found in the host nucleolus. Its subcellular location is the host cytoplasm. The protein localises to the secreted. Transcriptional activator that increases RNA Pol II processivity, thereby increasing the level of full-length viral transcripts. Recognizes a hairpin structure at the 5'-LTR of the nascent viral mRNAs referred to as the transactivation responsive RNA element (TAR) and recruits the cyclin T1-CDK9 complex (P-TEFb complex) that will in turn hyperphosphorylate the RNA polymerase II to allow efficient elongation. The CDK9 component of P-TEFb and other Tat-activated kinases hyperphosphorylate the C-terminus of RNA Pol II that becomes stabilized and much more processive. Other factors such as HTATSF1/Tat-SF1, SUPT5H/SPT5, and HTATIP2 are also important for Tat's function. Besides its effect on RNA Pol II processivity, Tat induces chromatin remodeling of proviral genes by recruiting the histone acetyltransferases (HATs) CREBBP, EP300 and PCAF to the chromatin. This also contributes to the increase in proviral transcription rate, especially when the provirus integrates in transcriptionally silent region of the host genome. To ensure maximal activation of the LTR, Tat mediates nuclear translocation of NF-kappa-B by interacting with host RELA. Through its interaction with host TBP, Tat may also modulate transcription initiation. Tat can reactivate a latently infected cell by penetrating in it and transactivating its LTR promoter. In the cytoplasm, Tat is thought to act as a translational activator of HIV-1 mRNAs. In terms of biological role, extracellular circulating Tat can be endocytosed by surrounding uninfected cells via the binding to several surface receptors such as CD26, CXCR4, heparan sulfate proteoglycans (HSPG) or LDLR. Neurons are rarely infected, but they internalize Tat via their LDLR. Through its interaction with nuclear HATs, Tat is potentially able to control the acetylation-dependent cellular gene expression. Modulates the expression of many cellular genes involved in cell survival, proliferation or in coding for cytokines or cytokine receptors. Tat plays a role in T-cell and neurons apoptosis. Tat induced neurotoxicity and apoptosis probably contribute to neuroAIDS. Circulating Tat also acts as a chemokine-like and/or growth factor-like molecule that binds to specific receptors on the surface of the cells, affecting many cellular pathways. In the vascular system, Tat binds to ITGAV/ITGB3 and ITGA5/ITGB1 integrins dimers at the surface of endothelial cells and competes with bFGF for heparin-binding sites, leading to an excess of soluble bFGF. The sequence is that of Protein Tat from Homo sapiens (Human).